The sequence spans 434 residues: ATP-dependent protease ATPase subunit HslU (434 aa).

ATP contacts are provided by residues Val-18, 60–65 (GVGKTE), Asp-247, Glu-312, and Arg-384.

It belongs to the ClpX chaperone family. HslU subfamily. A double ring-shaped homohexamer of HslV is capped on each side by a ring-shaped HslU homohexamer. The assembly of the HslU/HslV complex is dependent on binding of ATP.

Its subcellular location is the cytoplasm. In terms of biological role, ATPase subunit of a proteasome-like degradation complex; this subunit has chaperone activity. The binding of ATP and its subsequent hydrolysis by HslU are essential for unfolding of protein substrates subsequently hydrolyzed by HslV. HslU recognizes the N-terminal part of its protein substrates and unfolds these before they are guided to HslV for hydrolysis. This chain is ATP-dependent protease ATPase subunit HslU, found in Bradyrhizobium sp. (strain BTAi1 / ATCC BAA-1182).